Here is a 178-residue protein sequence, read N- to C-terminus: 6,7-dimethyl-8-ribityllumazine synthase (178 aa).

Residues Tyr27, Ser58–Glu60, and Cys82–Ile84 each bind 5-amino-6-(D-ribitylamino)uracil. Ala87–Thr88 contacts (2S)-2-hydroxy-3-oxobutyl phosphate. His90 acts as the Proton donor in catalysis. Position 114 (Asn114) interacts with 5-amino-6-(D-ribitylamino)uracil. Position 128 (Arg128) interacts with (2S)-2-hydroxy-3-oxobutyl phosphate.

This sequence belongs to the DMRL synthase family.

It catalyses the reaction (2S)-2-hydroxy-3-oxobutyl phosphate + 5-amino-6-(D-ribitylamino)uracil = 6,7-dimethyl-8-(1-D-ribityl)lumazine + phosphate + 2 H2O + H(+). The protein operates within cofactor biosynthesis; riboflavin biosynthesis; riboflavin from 2-hydroxy-3-oxobutyl phosphate and 5-amino-6-(D-ribitylamino)uracil: step 1/2. In terms of biological role, catalyzes the formation of 6,7-dimethyl-8-ribityllumazine by condensation of 5-amino-6-(D-ribitylamino)uracil with 3,4-dihydroxy-2-butanone 4-phosphate. This is the penultimate step in the biosynthesis of riboflavin. This Jannaschia sp. (strain CCS1) protein is 6,7-dimethyl-8-ribityllumazine synthase.